The chain runs to 1056 residues: MDRRIGLTSPSPKSTEKSGRDLRSGGDANGGANTNSNSIPRGDKEKGVNVQVILRCRPMSDEETKSNTPVVISCNERRREVAATQIIANKQIDRTFAFDKVFGPASKQKDLFEQSISPIVNEVLEGYNCTIFAYGQTGTGKTYTMEGGGTRKTKNGELPTDAGVIPRAVRQIFDILEAQCAEYSMKVTFLELYNEEITDLLAPEEPKFPIVPEDKTKKPIALMEDGKGGVFVRGLEEEVVYSAGEIYKILDKGSAKRRTAETLLNKQSSRSHSIFSITIHIKELTHEGEEMIKIGKLNLVDLAGSENISRSGARDGRAREAGEINKSLLTLGRVINALVEHSGHVPYRDSKLTRLLRDSLGGKTKTCIIATISPSVYCLEETLSTLDYAHRAKNIKNKPEVNQRMMKSAVIKDLYSEIDRLKQEVFAAREKNGIYIPRERYLQEEAEKKAMTEKIERLGADLEARDKQLVELKELYDAEQLLSAELSEKLGKTQKDLEDTKNVLHDLEEKYNEAESTIKEKEYVIFNLLKSEKSLVDCAYNLRAELENAAADVSGLFSKIERKDKIEDGNRSLVQRFRSQLTNQLDTLHKTVSTSVMQQENHLKEMEDDMQSFVSSKDEAAQGLRESIQKLKLLHGSGITALDSLAGEIDMNSQSTFERLNSQVQSHTSSLEQCFGGIASEADNLLNELQCSLSKQEERLTQFAKKQREGHLRAVEASRSISKITAGFFSSLDVHASKLTSILEETQSVQDQQLLDLEKKFEECAANEEKQLLEKVAEMLASSHARKKKLVQTAVGNLRESAVNRTSHLQNEISTAQDFTSSVREKWGFYMEETEKNYIEDTTAVDSGRSCLAEVLVECKAKTTMGAQQWKNAEDSLFSLGKGNVESADSIVRTGTEANQSLRSKLSSAVSTTLEEIDIANKALLSSIDSSLKLDHDACANIGSIIKPCHEEISELKGGHYHRVVEITENAGKCLEEEYLVDEPSCSTPRRRQIDLPSMESIEQLRTPDYDELLKSFRESRASLKQANGDMKHFLEVQEATPPSITDPRAPLIARN.

The interval 1 to 44 is disordered; it reads MDRRIGLTSPSPKSTEKSGRDLRSGGDANGGANTNSNSIPRGDK. Over residues 14–24 the composition is skewed to basic and acidic residues; that stretch reads STEKSGRDLRS. The 347-residue stretch at 49–395 folds into the Kinesin motor domain; the sequence is NVQVILRCRP…LDYAHRAKNI (347 aa). 135–142 is an ATP binding site; it reads GQTGTGKT. A coiled-coil region spans residues 443-525; sequence QEEAEKKAMT…STIKEKEYVI (83 aa).

It belongs to the TRAFAC class myosin-kinesin ATPase superfamily. Kinesin family. KIN-5/BimC subfamily.

Its subcellular location is the cytoplasm. The protein localises to the cytoskeleton. The protein resides in the spindle. In terms of biological role, responsible for microtubule translocation. May be important for the organization of phragmoplast-specific arrays of microtubules. Plays an essential role in stabilizing the mitotic spindle. Required during mitotic cytokinesis. The sequence is that of Kinesin-like protein KIN-5A from Oryza sativa subsp. japonica (Rice).